Here is a 622-residue protein sequence, read N- to C-terminus: Fanconi anemia group G protein (622 aa).

Position 7 is a phosphoserine (serine 7). TPR repeat units lie at residues 246 to 279, 344 to 377, 453 to 486, and 514 to 547; these read VQVY…GSAW, SQTK…LLDS, SATH…LFRA, and AAAL…CPGN.

In terms of assembly, belongs to the multisubunit FA complex composed of FANCA, FANCB, FANCC, FANCE, FANCF, FANCG, FANCL/PHF9 and FANCM. The complex is not found in FA patients. In complex with FANCF, FANCA and FANCL, but not with FANCC, nor FANCE, interacts with HES1; this interaction may be essential for the stability and nuclear localization of FA core complex proteins. The complex with FANCC and FANCG may also include EIF2AK2 and HSP70. When phosphorylated at Ser-7, forms a complex with BRCA2, FANCD2 and XRCC3. As to expression, highly expressed in testis and thymus. Found in lymphoblasts.

It is found in the nucleus. The protein resides in the cytoplasm. Its function is as follows. DNA repair protein that may operate in a postreplication repair or a cell cycle checkpoint function. May be implicated in interstrand DNA cross-link repair and in the maintenance of normal chromosome stability. Candidate tumor suppressor gene. This Homo sapiens (Human) protein is Fanconi anemia group G protein (FANCG).